The chain runs to 768 residues: P-selectin (768 aa).

Residues 1 to 41 (MAGCPKGSWTPRLRSVILGGAQLIWFSALISELVNQKEVAA) form the signal peptide. Over 42–709 (WTYNYSTKAY…QAGTLTIQEA (668 aa)) the chain is Extracellular. A C-type lectin domain is found at 58–158 (VFCRRHFTDL…PCFKRKRALC (101 aa)). Cystine bridges form between C60/C158, C131/C150, C163/C174, C168/C183, C185/C194, C200/C244, C230/C257, C262/C306, C292/C319, C324/C368, C354/C381, C386/C430, C416/C443, C448/C492, C478/C505, C510/C554, C540/C567, C580/C624, C610/C637, C642/C686, and C672/C699. Residues E121, N123, and N124 each contribute to the Ca(2+) site. N123 provides a ligand contact to a carbohydrate. Positions 133 and 146 each coordinate a carbohydrate. Ca(2+) contacts are provided by N146 and D147. Residues 159 to 195 (YTASCQDMSCSNQGECIETIGSYTCSCYPGFYGPECE) form the EGF-like domain. 8 Sushi domains span residues 198–259 (KECG…KCDA), 260–321 (VQCQ…TCEA), 322–383 (IACE…FCEA), 384–445 (LQCP…ECQA), 446–507 (VSCA…TCEA), 508–569 (IKCP…TCKG), 578–639 (VRCP…MCRA), and 640–701 (VKCS…TCQA). N398 carries an N-linked (GlcNAc...) asparagine glycan. A glycan (N-linked (GlcNAc...) asparagine) is linked at N603. N-linked (GlcNAc...) asparagine glycans are attached at residues N654, N661, and N679. The chain crosses the membrane as a helical span at residues 710–733 (LTYLGGAVASTTGLAVGGTLLALL). Topologically, residues 734-768 (RKRLRKKDDGKCPLNPHSHLGTYGVFTNAAYDPTP) are cytoplasmic. A lipid anchor (S-palmitoyl cysteine; alternate) is attached at C745. C745 carries the S-stearoyl cysteine; alternate lipid modification. The short motif at 756–759 (YGVF) is the Endocytosis signal element. The segment at 759–768 (FTNAAYDPTP) is interaction with SNX17.

Belongs to the selectin/LECAM family. In terms of assembly, interacts with SNX17. Interacts with SELPLG/PSGL1 and PODXL2 and mediates neutrophil adhesion and leukocyte rolling. This interaction requires the sialyl-Lewis X epitope of SELPLG and PODXL2, and specific tyrosine sulfation on SELPLG. Interacts (via C-type lectin domain) with alpha-IIb/beta3 integrin ITGA2B:ITGB3 and alpha-V/beta-3 integrin ITGAV:ITGB3. Interacts with alpha5/beta1 integrin ITGA5:ITGB1 and alpha4/beta1 integrin ITGA4:ITGB. As to expression, stored in the alpha-granules of platelets and Weibel-Palade bodies of endothelial cells. Upon cell activation by agonists, P-selectin is transported rapidly to the cell surface.

The protein localises to the cell membrane. In terms of biological role, ca(2+)-dependent receptor for myeloid cells that binds to carbohydrates on neutrophils and monocytes. Mediates the interaction of activated endothelial cells or platelets with leukocytes. The ligand recognized is sialyl-Lewis X. Mediates rapid rolling of leukocyte rolling over vascular surfaces during the initial steps in inflammation through interaction with SELPLG. Mediates cell-cell interactions and cell adhesion via the interaction with integrin alpha-IIb/beta3 (ITGA2B:ITGB3) and integrin alpha-V/beta-3 (ITGAV:ITGB3). This is P-selectin (Selp) from Mus musculus (Mouse).